Reading from the N-terminus, the 180-residue chain is MARLSAFNFQKWIDEHKHLLKPPVGNQQVWEDADLMVTVVGGPNKRTDYHDDPVEEFFYQLKGDMVLKLYEGGEFYDVPIREGDIFLLPPHVRHSPQRPQEGSIGLVIEPKRPEGAHDAIEWFCFGCGSLVHRAELLLESIVRDLPPVYQAFYADEQARTCPNCGEIHPGKEPPEGWVKL.

Position 46 (arginine 46) interacts with O2. Positions 50, 56, and 94 each coordinate Fe cation. A substrate-binding site is contributed by glutamate 56. The substrate site is built by arginine 98 and glutamate 109. Positions 124, 127, 161, and 164 each coordinate Fe cation.

This sequence belongs to the 3-HAO family. As to quaternary structure, homodimer. Fe(2+) serves as cofactor.

It carries out the reaction 3-hydroxyanthranilate + O2 = (2Z,4Z)-2-amino-3-carboxymuconate 6-semialdehyde. It functions in the pathway cofactor biosynthesis; NAD(+) biosynthesis; quinolinate from L-kynurenine: step 3/3. Functionally, catalyzes the oxidative ring opening of 3-hydroxyanthranilate to 2-amino-3-carboxymuconate semialdehyde, which spontaneously cyclizes to quinolinate. The protein is 3-hydroxyanthranilate 3,4-dioxygenase of Ruegeria pomeroyi (strain ATCC 700808 / DSM 15171 / DSS-3) (Silicibacter pomeroyi).